The following is a 660-amino-acid chain: Bifunctional polymyxin resistance protein ArnA (660 aa).

Residues 1–304 (MKTVVFAYHD…TLGLVQGSRL (304 aa)) are formyltransferase ArnAFT. 86–88 (HLI) lines the (6R)-10-formyltetrahydrofolate pocket. The active-site Proton donor; for formyltransferase activity is His104. (6R)-10-formyltetrahydrofolate is bound by residues Arg114 and 136 to 140 (VKRAD). A dehydrogenase ArnADH region spans residues 314–660 (RRTRVLILGV…RTVDLTDKPS (347 aa)). NAD(+) is bound by residues Asp347 and 368–369 (DI). UDP-alpha-D-glucuronate contacts are provided by residues Ala393, Tyr398, and 432–433 (TS). Residue Glu434 is the Proton acceptor; for decarboxylase activity of the active site. UDP-alpha-D-glucuronate contacts are provided by residues Arg460, Asn492, 526–535 (KLIDGGKQKR), and Tyr613. The active-site Proton donor; for decarboxylase activity is Arg619.

The protein in the N-terminal section; belongs to the Fmt family. UDP-L-Ara4N formyltransferase subfamily. This sequence in the C-terminal section; belongs to the NAD(P)-dependent epimerase/dehydratase family. UDP-glucuronic acid decarboxylase subfamily. Homohexamer, formed by a dimer of trimers.

The enzyme catalyses UDP-alpha-D-glucuronate + NAD(+) = UDP-beta-L-threo-pentopyranos-4-ulose + CO2 + NADH. It carries out the reaction UDP-4-amino-4-deoxy-beta-L-arabinose + (6R)-10-formyltetrahydrofolate = UDP-4-deoxy-4-formamido-beta-L-arabinose + (6S)-5,6,7,8-tetrahydrofolate + H(+). Its pathway is nucleotide-sugar biosynthesis; UDP-4-deoxy-4-formamido-beta-L-arabinose biosynthesis; UDP-4-deoxy-4-formamido-beta-L-arabinose from UDP-alpha-D-glucuronate: step 1/3. It participates in nucleotide-sugar biosynthesis; UDP-4-deoxy-4-formamido-beta-L-arabinose biosynthesis; UDP-4-deoxy-4-formamido-beta-L-arabinose from UDP-alpha-D-glucuronate: step 3/3. It functions in the pathway bacterial outer membrane biogenesis; lipopolysaccharide biosynthesis. Bifunctional enzyme that catalyzes the oxidative decarboxylation of UDP-glucuronic acid (UDP-GlcUA) to UDP-4-keto-arabinose (UDP-Ara4O) and the addition of a formyl group to UDP-4-amino-4-deoxy-L-arabinose (UDP-L-Ara4N) to form UDP-L-4-formamido-arabinose (UDP-L-Ara4FN). The modified arabinose is attached to lipid A and is required for resistance to polymyxin and cationic antimicrobial peptides. The chain is Bifunctional polymyxin resistance protein ArnA from Escherichia coli O81 (strain ED1a).